Here is a 290-residue protein sequence, read N- to C-terminus: 33 kDa chaperonin (290 aa).

Disulfide bonds link cysteine 235/cysteine 237 and cysteine 268/cysteine 271.

It belongs to the HSP33 family. Post-translationally, under oxidizing conditions two disulfide bonds are formed involving the reactive cysteines. Under reducing conditions zinc is bound to the reactive cysteines and the protein is inactive.

It is found in the cytoplasm. In terms of biological role, redox regulated molecular chaperone. Protects both thermally unfolding and oxidatively damaged proteins from irreversible aggregation. Plays an important role in the bacterial defense system toward oxidative stress. In Streptococcus pyogenes serotype M1, this protein is 33 kDa chaperonin.